Reading from the N-terminus, the 1109-residue chain is DNA mismatch repair protein MSH7 (1109 aa).

Disordered regions lie at residues 19–45 (TKGL…KEGD) and 61–86 (DEVR…KPAE). Basic and acidic residues predominate over residues 61 to 74 (DEVRGTDTPPEKVP). Residue 853–860 (GPNMGGKS) participates in ATP binding.

This sequence belongs to the DNA mismatch repair MutS family. As to quaternary structure, heterodimer consisting of MSH2-MSH7 (MutS gamma).

It is found in the nucleus. Its function is as follows. Component of the post-replicative DNA mismatch repair system (MMR). Forms the heterodimer MutS gamma (MSH2-MSH7 heterodimer) which binds to DNA mismatches thereby initiating DNA repair. MutS gamma recognizes specifically the T/G single base mismatch, but not trinucleotide insertion-deletion loops (IDL). The chain is DNA mismatch repair protein MSH7 (MSH7) from Arabidopsis thaliana (Mouse-ear cress).